A 337-amino-acid chain; its full sequence is HTH-type transcriptional regulator DegA (337 aa).

In terms of domain architecture, HTH lacI-type spans 1–57 (MKTTIYDVAKAAGVSITTVSRVINNTGRISDKTRQKVMNVMNEMAYTPNVHAAALTG). The H-T-H motif DNA-binding region spans 5–24 (IYDVAKAAGVSITTVSRVIN). A disordered region spans residues 300–319 (AERHRTAGRSNRGKRKAKQK).

Functionally, involved in the control of degradation of B.subtilis amidophosphoribosyltransferase (purF). Probably activates the gene for a degradative protease. The protein is HTH-type transcriptional regulator DegA (degA) of Bacillus subtilis (strain 168).